A 107-amino-acid polypeptide reads, in one-letter code: Urease subunit beta (107 aa).

The protein belongs to the urease beta subunit family. Heterotrimer of UreA (gamma), UreB (beta) and UreC (alpha) subunits. Three heterotrimers associate to form the active enzyme.

It is found in the cytoplasm. It catalyses the reaction urea + 2 H2O + H(+) = hydrogencarbonate + 2 NH4(+). It participates in nitrogen metabolism; urea degradation; CO(2) and NH(3) from urea (urease route): step 1/1. The chain is Urease subunit beta from Teredinibacter turnerae (strain ATCC 39867 / T7901).